The sequence spans 182 residues: CASP-like protein 2B1 (182 aa).

The Cytoplasmic segment spans residues 1–12 (MKLIDRRMRLTE). Residues 13 to 31 (LLLRCSISVFALLALILVV) form a helical membrane-spanning segment. Over 32-52 (TDTEVKLIFTIKKTAKYTDMK) the chain is Extracellular. Residues 53 to 73 (AVVFLVVANGIAAVYSLLQSV) traverse the membrane as a helical segment. The Cytoplasmic portion of the chain corresponds to 74–89 (RCVVGTMKGRVLFSKP). The chain crosses the membrane as a helical span at residues 90 to 110 (LAWAFFSGDQAMAYLNVAAIA). Over 111 to 141 (ATAESGVIAREGEEDLQWMRVCNMYGKFCNQ) the chain is Extracellular. A helical membrane pass occupies residues 142–162 (MAIGVSSALLASIAMVFVSCI). Residues 163–182 (SAFSLFRLYGATRDRRTTPW) lie on the Cytoplasmic side of the membrane.

It belongs to the Casparian strip membrane proteins (CASP) family. Homodimer and heterodimers.

The protein resides in the cell membrane. The sequence is that of CASP-like protein 2B1 from Arabidopsis lyrata subsp. lyrata (Lyre-leaved rock-cress).